The sequence spans 393 residues: Formate-dependent phosphoribosylglycinamide formyltransferase (393 aa).

N(1)-(5-phospho-beta-D-ribosyl)glycinamide contacts are provided by residues 22–23 (EL) and Glu82. Residues Arg114, Lys155, 160-165 (SSGKGQ), 195-198 (EGFI), and Glu203 each bind ATP. Residues 119–308 (RLAAEELDLP…QFALHARAIL (190 aa)) enclose the ATP-grasp domain. The Mg(2+) site is built by Glu267 and Glu279. N(1)-(5-phospho-beta-D-ribosyl)glycinamide is bound by residues Asp286, Lys356, and 363 to 364 (RR).

This sequence belongs to the PurK/PurT family. In terms of assembly, homodimer.

It carries out the reaction N(1)-(5-phospho-beta-D-ribosyl)glycinamide + formate + ATP = N(2)-formyl-N(1)-(5-phospho-beta-D-ribosyl)glycinamide + ADP + phosphate + H(+). It participates in purine metabolism; IMP biosynthesis via de novo pathway; N(2)-formyl-N(1)-(5-phospho-D-ribosyl)glycinamide from N(1)-(5-phospho-D-ribosyl)glycinamide (formate route): step 1/1. In terms of biological role, involved in the de novo purine biosynthesis. Catalyzes the transfer of formate to 5-phospho-ribosyl-glycinamide (GAR), producing 5-phospho-ribosyl-N-formylglycinamide (FGAR). Formate is provided by PurU via hydrolysis of 10-formyl-tetrahydrofolate. This chain is Formate-dependent phosphoribosylglycinamide formyltransferase, found in Pseudomonas fluorescens (strain ATCC BAA-477 / NRRL B-23932 / Pf-5).